An 88-amino-acid chain; its full sequence is U-scoloptoxin(12)-Sa1a (88 aa).

Residues 1-20 (MKYMIITVVILFTCALKMFC) form the signal peptide.

It belongs to the scoloptoxin-12 family. In terms of processing, contains 3 disulfide bonds. Expressed by the venom gland.

It localises to the secreted. This chain is U-scoloptoxin(12)-Sa1a, found in Scolopendra alternans (Florida Keys giant centipede).